The sequence spans 412 residues: Inositol polyphosphate-5-phosphatase A (412 aa).

A lipid anchor (S-farnesyl cysteine) is attached at C409. A propeptide spans 410–412 (VVQ) (removed in mature form).

Belongs to the inositol 1,4,5-trisphosphate 5-phosphatase type I family. As to quaternary structure, interacts with TASOR. In terms of processing, isoprenylation at Cys-409 is required for localization at the membrane.

It is found in the cell membrane. The protein resides in the cell projection. It localises to the dendrite. The catalysed reaction is 1D-myo-inositol 1,4,5-trisphosphate + H2O = 1D-myo-inositol 1,4-bisphosphate + phosphate. It catalyses the reaction 1D-myo-inositol 1,3,4,5-tetrakisphosphate + H2O = 1D-myo-inositol 1,3,4-trisphosphate + phosphate. With respect to regulation, inhibited by EDTA and 2,3-bisphosphoglycerate. In terms of biological role, phosphatase that specifically hydrolyzes the 5-phosphate of inositol 1,4,5-trisphosphate to inositol 1,4-bisphosphate, and inositol 1,3,4,5-tetrasphosphate to inositol 1,3,4-trisphosphate. Plays a crucial role in the survival of cerebellar Purkinje cells. This Canis lupus familiaris (Dog) protein is Inositol polyphosphate-5-phosphatase A (INPP5A).